The primary structure comprises 607 residues: MRKRIYHSFKTQQHPLLLRRPLPPKLPKLPLVKKKVRIVQTGSAREPQEARRKFDTEESALVKIDQSVSQPQKPASVQNVCLDYEHDEPERVVNIFPHPHGVRRLHWKVPKSAAGSMFIPRCLSASSRVFRKTLSQIKRARKSLKSKQDEDLTKKPFSNTLVISEELSKPLPPSYSRLIASRFKHSGTKFRPAPKISHYIQELPLLKDVKETVLSPISSASSAIPEPEWSERPLPKTTIGKVIQLNTGSLPPAHSLPTPALPRKPPRQIMIENAVMTRKTETQKPVEITLRPTRRLDPDAHVLRGDGFKAVGATRSETILALTTLAIINCQIYGRNALNFKGFFLAQCPDLTSVAFQLVYLNLSYNDLHQFPGEVLYLQNLQVLKLRNNPIREIPSEIQQLKYLRKFTIAFNFITSLPAGLFCLNYLEELDVSYNEIENIPNEIQKLRSLEKLTVDGTNITAFPPGILKLNLVKLEFENTFTIPPFWLENSCNNPPRLTHICSLFIVKNNLHKILDYDPVVVQKYLISTSDCDWCHGPKFGEGFGIIRSCNIFGLSHVPIKFHVCSLSCYLEIRESSFVLEGFPSRRIALNMDWVKERKVSNVSFYL.

LRR repeat units follow at residues 357–378 (QLVY…VLYL), 380–401 (NLQV…IQQL), 403–424 (YLRK…LFCL), 426–447 (YLEE…IQKL), 449–470 (SLEK…ILKL), 471–497 (NLVK…NPPR), and 498–524 (LTHI…VVQK).

The sequence is that of Leucine-rich repeat-containing protein 63 (Lrrc63) from Rattus norvegicus (Rat).